A 385-amino-acid polypeptide reads, in one-letter code: Elongation factor Ts, mitochondrial (385 aa).

The N-terminal 50 residues, 1–50 (MAWSQSARKPMIGLLFRAQQHGARGYSYSAFQAHLSSSNVDQSATLLRRF), are a transit peptide targeting the mitochondrion.

Belongs to the EF-Ts family.

The protein localises to the mitochondrion. Functionally, associates with the EF-Tu.GDP complex and induces the exchange of GDP to GTP. It remains bound to the aminoacyl-tRNA.EF-Tu.GTP complex up to the GTP hydrolysis stage on the ribosome. The protein is Elongation factor Ts, mitochondrial of Oryza sativa subsp. indica (Rice).